The chain runs to 408 residues: Dual-specificity RNA methyltransferase RlmN (408 aa).

Glu120 functions as the Proton acceptor in the catalytic mechanism. The region spanning 126–375 (EEGRGTLCIS…IRTPRGRDIL (250 aa)) is the Radical SAM core domain. Cysteines 133 and 378 form a disulfide. [4Fe-4S] cluster is bound by residues Cys140, Cys144, and Cys147. S-adenosyl-L-methionine is bound by residues 204–205 (GE), Ser236, 258–260 (SLH), and Asn335. Residue Cys378 is the S-methylcysteine intermediate of the active site.

It belongs to the radical SAM superfamily. RlmN family. Requires [4Fe-4S] cluster as cofactor.

The protein resides in the cytoplasm. It catalyses the reaction adenosine(2503) in 23S rRNA + 2 reduced [2Fe-2S]-[ferredoxin] + 2 S-adenosyl-L-methionine = 2-methyladenosine(2503) in 23S rRNA + 5'-deoxyadenosine + L-methionine + 2 oxidized [2Fe-2S]-[ferredoxin] + S-adenosyl-L-homocysteine. The enzyme catalyses adenosine(37) in tRNA + 2 reduced [2Fe-2S]-[ferredoxin] + 2 S-adenosyl-L-methionine = 2-methyladenosine(37) in tRNA + 5'-deoxyadenosine + L-methionine + 2 oxidized [2Fe-2S]-[ferredoxin] + S-adenosyl-L-homocysteine. Functionally, specifically methylates position 2 of adenine 2503 in 23S rRNA and position 2 of adenine 37 in tRNAs. m2A2503 modification seems to play a crucial role in the proofreading step occurring at the peptidyl transferase center and thus would serve to optimize ribosomal fidelity. This Rhizobium leguminosarum bv. trifolii (strain WSM2304) protein is Dual-specificity RNA methyltransferase RlmN.